We begin with the raw amino-acid sequence, 536 residues long: Probable cytochrome P450 12a5, mitochondrial (536 aa).

Cysteine 482 lines the heme pocket.

This sequence belongs to the cytochrome P450 family. It depends on heme as a cofactor.

It is found in the mitochondrion membrane. The protein is Probable cytochrome P450 12a5, mitochondrial (Cyp12a5) of Drosophila melanogaster (Fruit fly).